A 396-amino-acid polypeptide reads, in one-letter code: Pinosylvin synthase 1 (396 aa).

60–63 (KFKR) is a substrate binding site. C170 is a catalytic residue. Residues L273 and 311–313 (GGH) contribute to the substrate site.

It belongs to the thiolase-like superfamily. Chalcone/stilbene synthases family. In terms of assembly, homodimer.

The protein resides in the cytoplasm. It catalyses the reaction (E)-cinnamoyl-CoA + 3 malonyl-CoA + 3 H(+) = (E)-pinosylvin + 4 CO2 + 4 CoA. The catalysed reaction is 3-phenylpropanoyl-CoA + 3 malonyl-CoA + 3 H(+) = dihydropinosylvin + 4 CO2 + 4 CoA. Its pathway is phytoalexin biosynthesis; pinosylvin biosynthesis. Functionally, catalyzes the production of pinosylvin from cinnamoyl-CoA and malonyl-CoA, and dihydropinosylvin from dihydrocinnamoyl-CoA. The polypeptide is Pinosylvin synthase 1 (Pinus strobus (Eastern white pine)).